Reading from the N-terminus, the 702-residue chain is Phosphatase and actin regulator 4 (702 aa).

3 disordered regions span residues 1–38, 82–194, and 222–363; these read MEDP…SKFS, GVLL…SSGG, and NLSV…PFPA. Residues 63-88 form an RPEL 1 repeat; it reads EVLERKISMRKPREELVKRGVLLEDP. The span at 106–120 shows a compositional bias: polar residues; the sequence is GHTTPIGNARSSSPV. Residues serine 116, serine 118, serine 131, and serine 147 each carry the phosphoserine modification. Residues 147–156 are compositionally biased toward polar residues; sequence STGSQPNSEA. The span at 163–173 shows a compositional bias: pro residues; it reads VPKPPLLPPKR. Residues 233–250 show a composition bias toward low complexity; sequence TLPAAPASTNTTATPSLT. 2 positions are modified to phosphoserine: serine 270 and serine 291. A compositionally biased stretch (polar residues) spans 301 to 318; the sequence is PSTSVPTLESAAAITTKT. Serine 342 and serine 344 each carry phosphoserine. Over residues 342–362 the composition is skewed to pro residues; sequence SPSPPLPTHIPPEPPRTPPFP. Position 358 is a phosphothreonine (threonine 358). Serine 427 carries the phosphoserine modification. Threonine 432 carries the phosphothreonine modification. Residues serine 443, serine 453, and serine 464 each carry the phosphoserine modification. The segment at 473–536 is disordered; sequence KVPDDEEEEE…EEDEDESYQS (64 aa). Residues 486–497 show a composition bias toward low complexity; that stretch reads PSTFSEETTPTS. Over residues 508–518 the composition is skewed to acidic residues; sequence EEEEKESDSDS. Serine 514, serine 516, serine 557, and serine 590 each carry phosphoserine. 2 RPEL repeats span residues 583 to 608 and 621 to 646; these read NTLI…QPKN and RRLT…RFNE. The disordered stretch occupies residues 592–615; that stretch reads RPTPEELEQRNILQPKNEADRQAE. Phosphoserine is present on serine 628.

This sequence belongs to the phosphatase and actin regulator family. As to quaternary structure, binds PPP1CA and actin.

It is found in the cytoplasm. Its subcellular location is the cell projection. The protein resides in the lamellipodium. Functionally, regulator of protein phosphatase 1 (PP1) required for neural tube and optic fissure closure, and enteric neural crest cell (ENCCs) migration during development. Acts as an activator of PP1 by interacting with PPP1CA and preventing phosphorylation of PPP1CA at 'Thr-320'. During neural tube closure, localizes to the ventral neural tube and activates PP1, leading to down-regulate cell proliferation within cranial neural tissue and the neural retina. Also acts as a regulator of migration of enteric neural crest cells (ENCCs) by activating PP1, leading to dephosphorylation and subsequent activation of cofilin (COF1 or COF2) and repression of the integrin signaling through the RHO/ROCK pathway. In Pongo abelii (Sumatran orangutan), this protein is Phosphatase and actin regulator 4 (PHACTR4).